We begin with the raw amino-acid sequence, 331 residues long: MSMTTRAWEELDGGLGSCQALEDHSALAETQEDRASATPRLADSGSVPHDSQVAEGPSVDTRPKKMEKEPAARGTPGTGKERLKAGASPRSVPARKKAQTAPPLQPPPPPPALSEELPWGDLSLNKCLVLASLVALLGSAFQLCRDAVPGEAALQARVPEPWVPPSSAPREPSSPLPKFEAQAPPSAPPAPRAEAEVRPKIPGSREAAENDEEEPGEATGEAVREDRVTLADRGPKERPRREGKPRKEKPRKEERPKKERPRKEERPRAAREPREALPQRWESREGGHRPWARDSRDAEPRKKQAWVSPRRPDEEQRPGSRQKLRAGKGRD.

Disordered stretches follow at residues 1–118 and 157–331; these read MSMT…EELP and RVPE…KGRD. Residues 3–76 form a mediates interaction with CACNA1S region; the sequence is MTTRAWEELD…EKEPAARGTP (74 aa). Composition is skewed to basic and acidic residues over residues 21–35 and 61–71; these read LEDH…EDRA and TRPKKMEKEPA. Composition is skewed to pro residues over residues 103–112 and 161–175; these read PLQPPPPPPA and PWVP…PSSP. Composition is skewed to basic and acidic residues over residues 222–242 and 250–302; these read AVRE…PRRE and PRKE…EPRK. Residues 320–331 show a composition bias toward basic residues; sequence SRQKLRAGKGRD.

Interacts with CACNA1S, CACNB1 and calsequestrin.

It localises to the sarcoplasmic reticulum membrane. Its subcellular location is the endoplasmic reticulum membrane. In terms of biological role, involved in skeletal muscle excitation/contraction coupling (EC), probably acting as a regulator of the voltage-sensitive calcium channel CACNA1S. EC is a physiological process whereby an electrical signal (depolarization of the plasma membrane) is converted into a chemical signal, a calcium gradient, by the opening of ryanodine receptor calcium release channels. May regulate CACNA1S membrane targeting and activity. In Homo sapiens (Human), this protein is Junctional sarcoplasmic reticulum protein 1 (JSRP1).